The sequence spans 358 residues: Acyl-CoA desaturase 1 (358 aa).

Topologically, residues 1-71 (MPAHMLQEIS…EGPPPKLEYV (71 aa)) are cytoplasmic. Low complexity predominate over residues 8–24 (EISSSYTTTTTITEPPS). Positions 8 to 33 (EISSSYTTTTTITEPPSGNLQNGREK) are disordered. A helical transmembrane segment spans residues 72-92 (WRNIILMALLHVGALYGITLI). Asparagine 74 serves as a coordination point for substrate. Residues 93-96 (PSSK) are Lumenal-facing. The helical transmembrane segment at 97-117 (VYTLLWGIFYYLISALGITAG) threads the bilayer. Over 118–216 (AHRLWSHRTY…EKLVMFQRRY (99 aa)) the chain is Cytoplasmic. Residues histidine 119 and histidine 124 each contribute to the Fe cation site. The Histidine box-1 motif lies at 119–124 (HRLWSH). Positions 147, 154, and 155 each coordinate substrate. Histidine 156, histidine 159, and histidine 160 together coordinate Fe cation. The Histidine box-2 signature appears at 156–160 (HRAHH). Substrate-binding residues include arginine 187 and lysine 188. A helical transmembrane segment spans residues 217–236 (YKPGLLLMCFILPTLVPWYC). Residues 237-240 (WGET) lie on the Lumenal side of the membrane. Residues 241 to 262 (FLHSLFVSTFLRYTLVLNATWL) form a helical membrane-spanning segment. Residue tryptophan 261 participates in substrate binding. Topologically, residues 263-358 (VNSAAHLYGY…RTGDGSHKSS (96 aa)) are cytoplasmic. Fe cation contacts are provided by histidine 268, histidine 297, histidine 300, and histidine 301. The Histidine box-3 signature appears at 297 to 301 (HNYHH).

The protein belongs to the fatty acid desaturase type 1 family. The cofactor is Fe(2+). As to expression, detected in liver (at protein level). Detected in adipose tissue. Detected in liver when rats are kept on a fat-free diet, but not when their food contains unsaturated fatty acids.

The protein resides in the endoplasmic reticulum membrane. The protein localises to the membrane. It carries out the reaction octadecanoyl-CoA + 2 Fe(II)-[cytochrome b5] + O2 + 2 H(+) = (9Z)-octadecenoyl-CoA + 2 Fe(III)-[cytochrome b5] + 2 H2O. Its function is as follows. Stearoyl-CoA desaturase that utilizes O(2) and electrons from reduced cytochrome b5 to introduce the first double bond into saturated fatty acyl-CoA substrates. Catalyzes the insertion of a cis double bond at the Delta-9 position into fatty acyl-CoA substrates including palmitoyl-CoA and stearoyl-CoA. Gives rise to a mixture of 16:1 and 18:1 unsaturated fatty acids. Plays an important role in lipid biosynthesis. Plays an important role in regulating the expression of genes that are involved in lipogenesis and in regulating mitochondrial fatty acid oxidation. Plays an important role in body energy homeostasis. Contributes to the biosynthesis of membrane phospholipids, cholesterol esters and triglycerides. Required for normal development of sebaceous glands. Required for the biosynthesis of normal levels of Delta-9 unsaturated fatty acids and 1-alkyl-2,3-diacylglycerol in the Harderian gland. Required for normal production of meibum, an oily material that prevents drying of the cornea. The chain is Acyl-CoA desaturase 1 (Scd1) from Rattus norvegicus (Rat).